Reading from the N-terminus, the 253-residue chain is Adapter protein MecA (253 aa).

This sequence belongs to the MecA family. As to quaternary structure, homodimer.

Enables the recognition and targeting of unfolded and aggregated proteins to the ClpC protease or to other proteins involved in proteolysis. The polypeptide is Adapter protein MecA (Streptococcus pyogenes serotype M6 (strain ATCC BAA-946 / MGAS10394)).